The following is a 143-amino-acid chain: Transcription antitermination protein NusB (143 aa).

It belongs to the NusB family.

Functionally, involved in transcription antitermination. Required for transcription of ribosomal RNA (rRNA) genes. Binds specifically to the boxA antiterminator sequence of the ribosomal RNA (rrn) operons. The chain is Transcription antitermination protein NusB from Clostridium botulinum (strain Kyoto / Type A2).